The chain runs to 297 residues: 4-hydroxy-tetrahydrodipicolinate synthase (297 aa).

Thr47 is a pyruvate binding site. Tyr135 serves as the catalytic Proton donor/acceptor. The Schiff-base intermediate with substrate role is filled by Lys163. Pyruvate is bound at residue Ile205.

It belongs to the DapA family. As to quaternary structure, homotetramer; dimer of dimers.

Its subcellular location is the cytoplasm. The enzyme catalyses L-aspartate 4-semialdehyde + pyruvate = (2S,4S)-4-hydroxy-2,3,4,5-tetrahydrodipicolinate + H2O + H(+). It participates in amino-acid biosynthesis; L-lysine biosynthesis via DAP pathway; (S)-tetrahydrodipicolinate from L-aspartate: step 3/4. In terms of biological role, catalyzes the condensation of (S)-aspartate-beta-semialdehyde [(S)-ASA] and pyruvate to 4-hydroxy-tetrahydrodipicolinate (HTPA). The chain is 4-hydroxy-tetrahydrodipicolinate synthase from Dehalococcoides mccartyi (strain ATCC BAA-2100 / JCM 16839 / KCTC 5957 / BAV1).